The chain runs to 394 residues: Elongation factor Tu (394 aa).

In terms of domain architecture, tr-type G spans 10-204; the sequence is KAHVNIGTIG…SVDSYIPTPT (195 aa). A G1 region spans residues 19–26; it reads GHIDHGKT. 19-26 is a GTP binding site; the sequence is GHIDHGKT. Position 26 (threonine 26) interacts with Mg(2+). The G2 stretch occupies residues 60 to 64; the sequence is GITIN. The G3 stretch occupies residues 81-84; sequence DCPG. GTP-binding positions include 81 to 85 and 136 to 139; these read DCPGH and NKCD. The interval 136 to 139 is G4; it reads NKCD. The G5 stretch occupies residues 174–176; that stretch reads SAL.

The protein belongs to the TRAFAC class translation factor GTPase superfamily. Classic translation factor GTPase family. EF-Tu/EF-1A subfamily. In terms of assembly, monomer.

Its subcellular location is the cytoplasm. It catalyses the reaction GTP + H2O = GDP + phosphate + H(+). Functionally, GTP hydrolase that promotes the GTP-dependent binding of aminoacyl-tRNA to the A-site of ribosomes during protein biosynthesis. This chain is Elongation factor Tu, found in Malacoplasma penetrans (strain HF-2) (Mycoplasma penetrans).